We begin with the raw amino-acid sequence, 358 residues long: Nicotinate-nucleotide--dimethylbenzimidazole phosphoribosyltransferase (358 aa).

The active-site Proton acceptor is E314.

This sequence belongs to the CobT family.

The catalysed reaction is 5,6-dimethylbenzimidazole + nicotinate beta-D-ribonucleotide = alpha-ribazole 5'-phosphate + nicotinate + H(+). It functions in the pathway nucleoside biosynthesis; alpha-ribazole biosynthesis; alpha-ribazole from 5,6-dimethylbenzimidazole: step 1/2. Catalyzes the synthesis of alpha-ribazole-5'-phosphate from nicotinate mononucleotide (NAMN) and 5,6-dimethylbenzimidazole (DMB). In Mycobacterium marinum (strain ATCC BAA-535 / M), this protein is Nicotinate-nucleotide--dimethylbenzimidazole phosphoribosyltransferase.